A 75-amino-acid chain; its full sequence is Small ribosomal subunit protein bS18 (75 aa).

This sequence belongs to the bacterial ribosomal protein bS18 family. As to quaternary structure, part of the 30S ribosomal subunit. Forms a tight heterodimer with protein bS6.

Binds as a heterodimer with protein bS6 to the central domain of the 16S rRNA, where it helps stabilize the platform of the 30S subunit. This is Small ribosomal subunit protein bS18 from Anaplasma marginale (strain St. Maries).